Consider the following 678-residue polypeptide: Pescadillo homolog (678 aa).

Residues 283–303 (EEEEPEEVDSEAGDEDDDDLP) show a composition bias toward acidic residues. The segment at 283–316 (EEEEPEEVDSEAGDEDDDDLPVLDSGTRRRRAAA) is disordered. Residues 361-451 (VCGSLFRGRV…VLMPTDLYAP (91 aa)) form the BRCT domain. The stretch at 552-587 (MTRKARKMYNNMKQKEAAKQERVQQLESKKAKLAAT) forms a coiled coil. The interval 563–678 (MKQKEAAKQE…DAAPAKRQRR (116 aa)) is disordered. Residues 564-581 (KQKEAAKQERVQQLESKK) show a composition bias toward basic and acidic residues. 2 stretches are compositionally biased toward low complexity: residues 597–618 (KPAAAGKAAAAKAAAPAKVAAS) and 630–661 (APAPAKGKGTPAAKGKEAPAPAKGKGAAAAKE). Basic and acidic residues predominate over residues 662–672 (APAKGGKDAAP).

It belongs to the pescadillo family.

It is found in the nucleus. Its subcellular location is the nucleolus. It localises to the nucleoplasm. Required for maturation of ribosomal RNAs and formation of the large ribosomal subunit. This is Pescadillo homolog from Chlamydomonas reinhardtii (Chlamydomonas smithii).